The following is a 282-amino-acid chain: Ribosomal RNA small subunit methyltransferase A (282 aa).

S-adenosyl-L-methionine-binding residues include histidine 11, leucine 13, glycine 44, glutamate 65, aspartate 90, and asparagine 106.

Belongs to the class I-like SAM-binding methyltransferase superfamily. rRNA adenine N(6)-methyltransferase family. RsmA subfamily.

It is found in the cytoplasm. It catalyses the reaction adenosine(1518)/adenosine(1519) in 16S rRNA + 4 S-adenosyl-L-methionine = N(6)-dimethyladenosine(1518)/N(6)-dimethyladenosine(1519) in 16S rRNA + 4 S-adenosyl-L-homocysteine + 4 H(+). Its function is as follows. Specifically dimethylates two adjacent adenosines (A1518 and A1519) in the loop of a conserved hairpin near the 3'-end of 16S rRNA in the 30S particle. May play a critical role in biogenesis of 30S subunits. This chain is Ribosomal RNA small subunit methyltransferase A, found in Synechococcus sp. (strain JA-2-3B'a(2-13)) (Cyanobacteria bacterium Yellowstone B-Prime).